The sequence spans 438 residues: Minor myo-inositol transporter IolF (438 aa).

The next 12 helical transmembrane spans lie at 15–35 (IAAALANYIDAGSIVAGSAGL), 49–69 (IGLLGALSANAISAAVGALLG), 86–106 (MLVYALGICLVLFGVNFPMLL), 108–128 (GYIIIGLSVGADITASWTIIA), 147–167 (WAAGAVVVLLLSVLAGDLGLL), 171–191 (IVFAHLLVIALITYILRIRLP), 230–250 (ILFLMGVYLVWNLAAGVMGFF), 268–288 (LLQMGLFIFTGLGVALIFMPF), 295–312 (TVFGIAAFMAVIGWTLFL), 317–334 (GLPILLLFIVVIGINNGA), 359–379 (LMFFLVRISIGIWSLFVPMII), and 387–407 (MAAILLGCVTASMIIGLLFAP).

The protein belongs to the major facilitator superfamily. Sugar transporter (TC 2.A.1.1) family.

It localises to the cell membrane. It functions in the pathway polyol metabolism; myo-inositol degradation into acetyl-CoA. Minor myo-inositol uptake transporter. The sequence is that of Minor myo-inositol transporter IolF (iolF) from Bacillus subtilis (strain 168).